We begin with the raw amino-acid sequence, 148 residues long: Calcium-permeable cation-selective channel WeiTsing (148 aa).

The Cytoplasmic portion of the chain corresponds to 1-25 (METVSAVNQTLPISGGEPVKFTTYS). The chain crosses the membrane as a helical span at residues 26–46 (AAVHKVLVMINAGILGLLQLV). Over 47–51 (SQQSS) the chain is Lumenal. The helical transmembrane segment at 52-72 (VLETHKAAFLCFCVFILFYAV) threads the bilayer. Residues 73–90 (LRVREAMDVRLQPGLVPR) are Cytoplasmic-facing. A helical membrane pass occupies residues 91 to 110 (LIGHGSHLFGGLAALVLVSV). Topologically, residues 111 to 116 (VSTAFS) are lumenal. Residues 117–133 (IVLFLLWFIWLSAVVYL) traverse the membrane as a helical segment. The Cytoplasmic segment spans residues 134–148 (ETNKPSACPPQLPPV).

In terms of assembly, forms pentamers with a central pore to produce an ion channel.

It localises to the endoplasmic reticulum membrane. It carries out the reaction Ca(2+)(in) = Ca(2+)(out). The catalysed reaction is Na(+)(in) = Na(+)(out). In terms of biological role, calcium-permeable cation-selective channel conferring a broad-spectrum clubroot resistance by supporting cytosolic Ca(2+) increase in root pericycle cells. Triggers immunity toward fungal pathogens such as Plasmodiophora brassicae (Pb) and induces defenses. Also permeable to sodium ion Na(+) and possibly other cations. The polypeptide is Calcium-permeable cation-selective channel WeiTsing (Arabidopsis thaliana (Mouse-ear cress)).